Here is a 476-residue protein sequence, read N- to C-terminus: Lipase (476 aa).

The signal sequence occupies residues 1 to 23 (MGIFDYKNLGTEGSKTLFADAMA). S207 functions as the Charge relay system in the catalytic mechanism. Hemolysin-type calcium-binding repeat units lie at residues 372-389 (IGSD…ADFI), 390-407 (EGGK…HNTF), and 410-427 (SGHF…TDKL). 3 residues coordinate Ca(2+): D437, D440, and D448.

The protein belongs to the AB hydrolase superfamily. Lipase family.

The catalysed reaction is a triacylglycerol + H2O = a diacylglycerol + a fatty acid + H(+). This chain is Lipase, found in Pseudomonas fluorescens.